The chain runs to 201 residues: Recombination protein RecR (201 aa).

The segment at 57-72 adopts a C4-type zinc-finger fold; sequence CECCRTLTEEPLCRIC. The Toprim domain occupies 81-176; sequence GVLCIVETPA…NTTRIAHGVP (96 aa).

Belongs to the RecR family.

Its function is as follows. May play a role in DNA repair. It seems to be involved in an RecBC-independent recombinational process of DNA repair. It may act with RecF and RecO. The polypeptide is Recombination protein RecR (Idiomarina loihiensis (strain ATCC BAA-735 / DSM 15497 / L2-TR)).